The primary structure comprises 139 residues: Bilirubin-inducible fluorescent protein UnaG (139 aa).

(4Z,15Z)-bilirubin IXalpha is bound by residues asparagine 57, threonine 61, serine 80, arginine 112, and 132-134 (RSY).

Belongs to the calycin superfamily. Fatty-acid binding protein (FABP) family. As to quaternary structure, monomer. Detected in small-diameter muscle fibers from the white muscle layer from juvenile animals (glass eels) (at protein level). Detected in small-diameter muscle fibers from juvenile animals (glass eels).

Its subcellular location is the cytoplasm. In terms of biological role, beta-barrel protein that binds unconjugated bilirubin with high affinity. Excitation of the bilirubin-bound protein gives rise to green fluorescence, both under normoxia and hypoxia. The apoprotein is not fluorescent. Does not emit fluorescence in the presence of ditauro-bilirubin, urobilin or biliverdin. This Anguilla japonica (Japanese eel) protein is Bilirubin-inducible fluorescent protein UnaG.